An 83-amino-acid chain; its full sequence is Gas vesicle protein G1 (83 aa).

Belongs to the gas vesicle GvpG family. As to quaternary structure, gvpF to GvpM interact with each other in vitro, and may form multi-subunit complex(es). Might interact with GvpA1.

It is found in the gas vesicle. Its function is as follows. Proteins GvpF to GvpM might be involved in nucleating gas vesicle formation. A minor component of the gas vesicle. Gas vesicles are hollow, gas filled proteinaceous nanostructures found in several microbial planktonic microorganisms. They allow positioning of halobacteria at the optimal depth for growth in the poorly aerated, shallow brine pools of their habitat. In terms of biological role, expression of a 9.5 kb p-vac DNA fragment containing 2 divergently transcribed regions (gvpD-gvpE-gvpF-gvpG-gvpH-gvpI-gvpJ-gvpK-gvpL-gvpM and gvpA-gvpC-gvpN-gvpO) allows H.volcanii to produce gas vesicles. A minimal gas vesicle can be made in H.volcanii by gvpA1-gvpO1 plus gvpF1-gvpG1-gvpJ1-gvpK1-gvpL1-gvpM1; lack of enough GvpJ1 prevents formation. A similar region restores gas vesicle production in H.halobium without the p-vac locus, but it still has the c-vac locus. This chain is Gas vesicle protein G1 (gvpG11), found in Halobacterium salinarum (strain ATCC 700922 / JCM 11081 / NRC-1) (Halobacterium halobium).